Reading from the N-terminus, the 1224-residue chain is Coatomer subunit alpha (1224 aa).

WD repeat units follow at residues 3 to 38 (TKFETKSARVKGLSFHPKRPWILTSLHNGVIQLWDY), 42 to 80 (TLIDKFDEHDGPVRGIDFHKQQPLFVSGGDDYKIKVWNY), 84 to 122 (RCLFTLLGHLDYIRTTFFHHEYPWILSASDDQTIRVWNW), and 126 to 164 (TCVCVLTGHNHYVMCAQFHPTEDLVVSASLDQTVRVWDI). Position 173 is a phosphoserine (Ser173). A Phosphothreonine modification is found at Thr185. WD repeat units lie at residues 195–234 (AVVKHVLEGHDRGVNWAAFHPTMPLIVSGADDRQVKIWRM), 241–278 (EVDTCRGHYNNVSCAVFHPRQELILSNSEDKSIRVWDM), and 282–319 (TGVQTFRRDHDRFWVLAAHPNLNLFAAGHDGGMIVFKL). The residue at position 402 (Ser402) is a Phosphoserine. Residue Thr591 is modified to Phosphothreonine. Ser895 is subject to Phosphoserine. Residue Arg965 is modified to Omega-N-methylarginine. Ser1193 carries the phosphoserine modification.

In terms of assembly, oligomeric complex that consists of at least the alpha, beta, beta', gamma, delta, epsilon and zeta subunits. Interacts with SCYL1. Interacts with JAGN1. Interacts with TMEM41B. Interacts with SVEP1. Probably interacts with PEX11A. Uniformly expressed in a wide range of adult and fetal tissues. Xenin is found in gastric, duodenal and jejunal mucosa. Circulates in the blood. Seems to be confined to specific endocrine cells.

The protein resides in the cytoplasm. Its subcellular location is the golgi apparatus membrane. The protein localises to the cytoplasmic vesicle. It localises to the COPI-coated vesicle membrane. It is found in the secreted. Its function is as follows. The coatomer is a cytosolic protein complex that binds to dilysine motifs and reversibly associates with Golgi non-clathrin-coated vesicles, which further mediate biosynthetic protein transport from the ER, via the Golgi up to the trans Golgi network. Coatomer complex is required for budding from Golgi membranes, and is essential for the retrograde Golgi-to-ER transport of dilysine-tagged proteins. In mammals, the coatomer can only be recruited by membranes associated to ADP-ribosylation factors (ARFs), which are small GTP-binding proteins; the complex also influences the Golgi structural integrity, as well as the processing, activity, and endocytic recycling of LDL receptors. Xenin stimulates exocrine pancreatic secretion. It inhibits pentagastrin-stimulated secretion of acid, to induce exocrine pancreatic secretion and to affect small and large intestinal motility. In the gut, xenin interacts with the neurotensin receptor. This chain is Coatomer subunit alpha (COPA), found in Homo sapiens (Human).